A 311-amino-acid chain; its full sequence is Ribosomal RNA small subunit methyltransferase A (311 aa).

6 residues coordinate S-adenosyl-L-methionine: Asn29, Val31, Gly56, Glu77, Asp107, and Asn126.

This sequence belongs to the class I-like SAM-binding methyltransferase superfamily. rRNA adenine N(6)-methyltransferase family. RsmA subfamily.

The protein resides in the cytoplasm. It catalyses the reaction adenosine(1518)/adenosine(1519) in 16S rRNA + 4 S-adenosyl-L-methionine = N(6)-dimethyladenosine(1518)/N(6)-dimethyladenosine(1519) in 16S rRNA + 4 S-adenosyl-L-homocysteine + 4 H(+). In terms of biological role, specifically dimethylates two adjacent adenosines (A1518 and A1519) in the loop of a conserved hairpin near the 3'-end of 16S rRNA in the 30S particle. May play a critical role in biogenesis of 30S subunits. This chain is Ribosomal RNA small subunit methyltransferase A, found in Mycolicibacterium vanbaalenii (strain DSM 7251 / JCM 13017 / BCRC 16820 / KCTC 9966 / NRRL B-24157 / PYR-1) (Mycobacterium vanbaalenii).